The following is a 278-amino-acid chain: Bicarbonate transport ATP-binding protein CmpD (278 aa).

Residues 21-254 (LIVENVSKIY…RPRDRERIME (234 aa)) form the ABC transporter domain. Residue 57-64 (GHSGCGKS) coordinates ATP.

The protein belongs to the ABC transporter superfamily. Nitrate/nitrite/cyanate uptake transporter (NitT) (TC 3.A.1.16) family. As to quaternary structure, the complex is composed of two ATP-binding proteins (CmpC and CmpD), a transmembrane protein (CmpB) and a solute-binding protein (CmpA).

Its subcellular location is the cell inner membrane. Its function is as follows. Part of the ABC transporter complex CmpABCD involved in bicarbonate transport. Responsible for energy coupling to the transport system. This is Bicarbonate transport ATP-binding protein CmpD (cmpD) from Synechococcus elongatus (strain ATCC 33912 / PCC 7942 / FACHB-805) (Anacystis nidulans R2).